The sequence spans 220 residues: PKHD-type hydroxylase PCC7424_1929 (220 aa).

The Fe2OG dioxygenase domain maps to 77–173 (KIHSLLFSRY…RLVAVGWVQS (97 aa)). 3 residues coordinate Fe cation: His95, Asp97, and His154. Arg164 lines the 2-oxoglutarate pocket.

Fe(2+) serves as cofactor. The cofactor is L-ascorbate.

The sequence is that of PKHD-type hydroxylase PCC7424_1929 from Gloeothece citriformis (strain PCC 7424) (Cyanothece sp. (strain PCC 7424)).